The primary structure comprises 399 residues: UDP-galactopyranose mutase (399 aa).

Residues serine 25, 44–45 (EK), asparagine 52, and 71–72 (HI) contribute to the FAD site. Residues serine 171, tryptophan 175, tyrosine 200, asparagine 297, arginine 306, and tyrosine 345 each coordinate UDP-alpha-D-galactose. FAD is bound at residue arginine 374. Tyrosine 380 serves as a coordination point for UDP-alpha-D-galactose. FAD is bound at residue 381 to 386 (IDMDRA).

It belongs to the UDP-galactopyranose/dTDP-fucopyranose mutase family. Requires FAD as cofactor.

The catalysed reaction is UDP-alpha-D-galactose = UDP-alpha-D-galactofuranose. In terms of biological role, involved in the conversion of UDP-GalP into UDP-GalF through a 2-keto intermediate. The polypeptide is UDP-galactopyranose mutase (glf) (Mycoplasma pneumoniae (strain ATCC 29342 / M129 / Subtype 1) (Mycoplasmoides pneumoniae)).